A 235-amino-acid chain; its full sequence is 1-(5-phosphoribosyl)-5-[(5-phosphoribosylamino)methylideneamino] imidazole-4-carboxamide isomerase (235 aa).

Residue aspartate 8 is the Proton acceptor of the active site. The active-site Proton donor is aspartate 129.

The protein belongs to the HisA/HisF family.

It is found in the cytoplasm. The enzyme catalyses 1-(5-phospho-beta-D-ribosyl)-5-[(5-phospho-beta-D-ribosylamino)methylideneamino]imidazole-4-carboxamide = 5-[(5-phospho-1-deoxy-D-ribulos-1-ylimino)methylamino]-1-(5-phospho-beta-D-ribosyl)imidazole-4-carboxamide. Its pathway is amino-acid biosynthesis; L-histidine biosynthesis; L-histidine from 5-phospho-alpha-D-ribose 1-diphosphate: step 4/9. The protein is 1-(5-phosphoribosyl)-5-[(5-phosphoribosylamino)methylideneamino] imidazole-4-carboxamide isomerase of Thermoanaerobacter sp. (strain X514).